A 293-amino-acid chain; its full sequence is Movement protein BC1 (293 aa).

This sequence belongs to the begomovirus movement protein BC1 family. Binds to dimeric supercoiled plasmid DNA. Post-translationally, phosphorylated.

The protein localises to the host cell membrane. It is found in the host microsome membrane. The protein resides in the host endoplasmic reticulum membrane. In terms of biological role, transports viral genome to neighboring plant cells directly through plasmosdesmata, without any budding. The movement protein allows efficient cell to cell propagation, by bypassing the host cell wall barrier. Begomovirus genome is shuttled out of nucleus by Nuclear shuttle protein (NSP) and the movement protein transports the DNA-NSP complex to cell plasmodesmata and facilitates further movement across the cell wall. In Macroptilium lathyroides (Lima bean), this protein is Movement protein BC1.